The primary structure comprises 398 residues: Stearoyl-[acyl-carrier-protein] 9-desaturase, chloroplastic (398 aa).

Residues 1-34 constitute a chloroplast transit peptide; that stretch reads MALKLHHTAFNPSMAVTSSGLPRSYHLRSHRVFM. Residues 46-66 form a disordered region; sequence IPNAKKPHMPPREAHVQKTHS. The Fe cation site is built by E140, E178, H181, E231, E264, and H267.

It belongs to the fatty acid desaturase type 2 family. Homodimer. Requires Fe(2+) as cofactor.

The protein localises to the plastid. Its subcellular location is the chloroplast. It carries out the reaction octadecanoyl-[ACP] + 2 reduced [2Fe-2S]-[ferredoxin] + O2 + 2 H(+) = (9Z)-octadecenoyl-[ACP] + 2 oxidized [2Fe-2S]-[ferredoxin] + 2 H2O. It functions in the pathway lipid metabolism; fatty acid metabolism. Converts stearoyl-ACP to oleoyl-ACP by introduction of a cis double bond between carbons 9 and 10 of the acyl chain. In Simmondsia chinensis (Jojoba), this protein is Stearoyl-[acyl-carrier-protein] 9-desaturase, chloroplastic.